Consider the following 362-residue polypeptide: Endopolygalacturonase II (362 aa).

The first 20 residues, 1-20, serve as a signal peptide directing secretion; the sequence is MHSFASLLRYGLAAGATLAS. The propeptide occupies 21–27; the sequence is ASPIEAR. Residues C30 and C45 are joined by a disulfide bond. The stretch at 156-186 is one PbH1 1 repeat; that stretch reads SDDITLTDITINNADGDSLGGHNTDAFDVGN. Residue D201 is the Proton donor of the active site. An intrachain disulfide couples C203 to C219. 4 PbH1 repeats span residues 209–229, 238–259, 267–289, and 301–322; these read GENI…SIGS, VKNV…RIKT, VSEI…VIQQ, and TNGV…DSKA. H223 is a catalytic residue. Residue N240 is glycosylated (N-linked (GlcNAc...) asparagine). 2 disulfides stabilise this stretch: C329-C334 and C353-C362.

Belongs to the glycosyl hydrolase 28 family.

It localises to the secreted. It catalyses the reaction (1,4-alpha-D-galacturonosyl)n+m + H2O = (1,4-alpha-D-galacturonosyl)n + (1,4-alpha-D-galacturonosyl)m.. Involved in maceration and soft-rotting of plant tissue. Hydrolyzes the 1,4-alpha glycosidic bonds of de-esterified pectate in the smooth region of the plant cell wall. This is Endopolygalacturonase II (pgaII) from Aspergillus awamori (Black koji mold).